A 635-amino-acid polypeptide reads, in one-letter code: 1-deoxy-D-xylulose-5-phosphate synthase (635 aa).

Residues H73 and 114 to 116 contribute to the thiamine diphosphate site; that span reads SHA. D146 serves as a coordination point for Mg(2+). Thiamine diphosphate-binding positions include 147–148, N176, Y287, and E368; that span reads GA. Mg(2+) is bound at residue N176.

Belongs to the transketolase family. DXPS subfamily. Homodimer. Requires Mg(2+) as cofactor. Thiamine diphosphate is required as a cofactor.

The enzyme catalyses D-glyceraldehyde 3-phosphate + pyruvate + H(+) = 1-deoxy-D-xylulose 5-phosphate + CO2. It participates in metabolic intermediate biosynthesis; 1-deoxy-D-xylulose 5-phosphate biosynthesis; 1-deoxy-D-xylulose 5-phosphate from D-glyceraldehyde 3-phosphate and pyruvate: step 1/1. Its function is as follows. Catalyzes the acyloin condensation reaction between C atoms 2 and 3 of pyruvate and glyceraldehyde 3-phosphate to yield 1-deoxy-D-xylulose-5-phosphate (DXP). The polypeptide is 1-deoxy-D-xylulose-5-phosphate synthase (Corynebacterium diphtheriae (strain ATCC 700971 / NCTC 13129 / Biotype gravis)).